A 430-amino-acid polypeptide reads, in one-letter code: tRNA-2-methylthio-N(6)-dimethylallyladenosine synthase (430 aa).

One can recognise an MTTase N-terminal domain in the interval 2–111 (KKIHIKTYGC…IPQAVERAIN (110 aa)). Positions 11, 47, 76, 147, 151, and 154 each coordinate [4Fe-4S] cluster. The Radical SAM core domain occupies 133–364 (RNSKHHAWIT…LNLQKEINKQ (232 aa)). In terms of domain architecture, TRAM spans 367-428 (ENYLNKTVEI…AGPLYGDIIK (62 aa)).

This sequence belongs to the methylthiotransferase family. MiaB subfamily. In terms of assembly, monomer. It depends on [4Fe-4S] cluster as a cofactor.

The protein resides in the cytoplasm. It catalyses the reaction N(6)-dimethylallyladenosine(37) in tRNA + (sulfur carrier)-SH + AH2 + 2 S-adenosyl-L-methionine = 2-methylsulfanyl-N(6)-dimethylallyladenosine(37) in tRNA + (sulfur carrier)-H + 5'-deoxyadenosine + L-methionine + A + S-adenosyl-L-homocysteine + 2 H(+). Functionally, catalyzes the methylthiolation of N6-(dimethylallyl)adenosine (i(6)A), leading to the formation of 2-methylthio-N6-(dimethylallyl)adenosine (ms(2)i(6)A) at position 37 in tRNAs that read codons beginning with uridine. In Thermosipho melanesiensis (strain DSM 12029 / CIP 104789 / BI429), this protein is tRNA-2-methylthio-N(6)-dimethylallyladenosine synthase.